A 136-amino-acid polypeptide reads, in one-letter code: Probable glycine cleavage system H protein 3 (136 aa).

The Lipoyl-binding domain occupies 28-109 (MVTVGITSLG…PYDAWIVKIK (82 aa)). Lys69 bears the N6-lipoyllysine mark.

The protein belongs to the GcvH family. In terms of assembly, the glycine cleavage system is composed of four proteins: P, T, L and H. (R)-lipoate serves as cofactor.

In terms of biological role, the glycine cleavage system catalyzes the degradation of glycine. The H protein shuttles the methylamine group of glycine from the P protein to the T protein. The chain is Probable glycine cleavage system H protein 3 from Sulfurisphaera tokodaii (strain DSM 16993 / JCM 10545 / NBRC 100140 / 7) (Sulfolobus tokodaii).